Consider the following 482-residue polypeptide: Hydroxymethylglutaryl-CoA synthase A (482 aa).

Glu-85 acts as the Proton donor/acceptor in catalysis. The active-site Acyl-thioester intermediate is the Cys-119. 7 residues coordinate (3S)-3-hydroxy-3-methylglutaryl-CoA: Cys-119, Thr-161, Ser-211, His-249, Lys-258, Asn-325, and Ser-358. The active-site Proton donor/acceptor is His-249.

It belongs to the thiolase-like superfamily. HMG-CoA synthase family.

It carries out the reaction acetoacetyl-CoA + acetyl-CoA + H2O = (3S)-3-hydroxy-3-methylglutaryl-CoA + CoA + H(+). Its pathway is metabolic intermediate biosynthesis; (R)-mevalonate biosynthesis; (R)-mevalonate from acetyl-CoA: step 2/3. Its function is as follows. Condenses acetyl-CoA with acetoacetyl-CoA to form HMG-CoA, which is the substrate for HMG-CoA reductase. In Dictyostelium discoideum (Social amoeba), this protein is Hydroxymethylglutaryl-CoA synthase A (hgsA).